The following is a 257-amino-acid chain: Tryptophan synthase alpha chain (257 aa).

Catalysis depends on proton acceptor residues Glu44 and Asp55.

The protein belongs to the TrpA family. As to quaternary structure, tetramer of two alpha and two beta chains.

The catalysed reaction is (1S,2R)-1-C-(indol-3-yl)glycerol 3-phosphate + L-serine = D-glyceraldehyde 3-phosphate + L-tryptophan + H2O. The protein operates within amino-acid biosynthesis; L-tryptophan biosynthesis; L-tryptophan from chorismate: step 5/5. Functionally, the alpha subunit is responsible for the aldol cleavage of indoleglycerol phosphate to indole and glyceraldehyde 3-phosphate. This Chlamydia caviae (strain ATCC VR-813 / DSM 19441 / 03DC25 / GPIC) (Chlamydophila caviae) protein is Tryptophan synthase alpha chain.